The chain runs to 126 residues: Holo-[acyl-carrier-protein] synthase (126 aa).

2 residues coordinate Mg(2+): Asp8 and Glu57.

This sequence belongs to the P-Pant transferase superfamily. AcpS family. Mg(2+) is required as a cofactor.

It is found in the cytoplasm. The catalysed reaction is apo-[ACP] + CoA = holo-[ACP] + adenosine 3',5'-bisphosphate + H(+). Its function is as follows. Transfers the 4'-phosphopantetheine moiety from coenzyme A to a Ser of acyl-carrier-protein. The polypeptide is Holo-[acyl-carrier-protein] synthase (Trichlorobacter lovleyi (strain ATCC BAA-1151 / DSM 17278 / SZ) (Geobacter lovleyi)).